The following is a 378-amino-acid chain: Ferredoxin--NADP reductase, embryo isozyme, chloroplastic (378 aa).

The transit peptide at 1–62 directs the protein to the chloroplast; the sequence is MASALGAQAS…SRHMNKIFSM (62 aa). Positions 93–221 constitute an FAD-binding FR-type domain; that stretch reads KEPYTATIVS…TGPSGKIMLL (129 aa). FAD-binding positions include 153–156, 174–176, Tyr180, 195–197, and Thr237; these read RLYS, CVR, and ICS. Residues Ser156 and Arg176 each coordinate NADP(+). NADP(+) contacts are provided by residues Thr237, 269-270, 299-300, Lys309, 337-338, and Glu376; these read VA, SR, and GL.

This sequence belongs to the ferredoxin--NADP reductase type 1 family. FAD is required as a cofactor.

The protein resides in the plastid. It is found in the chloroplast. The enzyme catalyses 2 reduced [2Fe-2S]-[ferredoxin] + NADP(+) + H(+) = 2 oxidized [2Fe-2S]-[ferredoxin] + NADPH. The protein operates within energy metabolism; photosynthesis. In terms of biological role, may play a key role in regulating the relative amounts of cyclic and non-cyclic electron flow to meet the demands of the plant for ATP and reducing power. Is involved in nitrate assimilation. The chain is Ferredoxin--NADP reductase, embryo isozyme, chloroplastic from Oryza sativa subsp. japonica (Rice).